A 525-amino-acid polypeptide reads, in one-letter code: M-phase inducer phosphatase 1 (525 aa).

A Phosphodegron motif is present at residues 73 to 83; it reads MGSSESTDSGF. The residue at position 75 (Ser75) is a Phosphoserine; by CHEK1. Phosphoserine; by NEK11 occurs at positions 78, 81, and 87. Phosphoserine is present on Ser106. Residue Ser123 is modified to Phosphoserine; by CHEK1 and CHEK2. The KEN box signature appears at 140–142; the sequence is KEN. Ser177 carries the post-translational modification Phosphoserine; by CHEK1. Disordered stretches follow at residues 179 to 204 and 262 to 308; these read PARMLSSNERDGNEPGNSIPFMPQSP and SASC…PEKP. Ser279 and Ser293 each carry phosphoserine; by CHEK1 and CHEK2. Low complexity predominate over residues 294 to 306; the sequence is VAGASPEEAASPE. Ser322 is subject to Phosphoserine. Positions 377-483 constitute a Rhodanese domain; sequence LIKEFVIIDC…FFLKCQSHCE (107 aa). Cys432 is an active-site residue. Phosphothreonine; by CHEK1 is present on Thr508. Ser514 and Ser520 each carry phosphoserine; by PLK3.

It belongs to the MPI phosphatase family. Interacts with CCNB1/cyclin B1. Interacts with YWHAE/14-3-3 epsilon when phosphorylated. Interacts with CUL1 specifically when CUL1 is neddylated and active. Interacts with BTRC/BTRCP1 and FBXW11/BTRCP2. Interactions with CUL1, BTRC and FBXW11 are enhanced upon DNA damage. Interacts with HSP90AB1; prevents heat shock-mediated CDC25A degradation and contributes to cell cycle progression. Post-translationally, phosphorylated by CHEK1 on Ser-75, Ser-123, Ser-177, Ser-279, Ser-293 and Thr-508 during checkpoint mediated cell cycle arrest. Also phosphorylated by CHEK2 on Ser-123, Ser-279, and Ser-293 during checkpoint mediated cell cycle arrest. Phosphorylation on Ser-177 and Thr-508 creates binding sites for YWHAE/14-3-3 epsilon which inhibits CDC25A. Phosphorylation on Ser-75, Ser-123, Ser-177, Ser-279 and Ser-293 may also promote ubiquitin-dependent proteolysis of CDC25A by the SCF complex. Phosphorylation of CDC25A at Ser-75 by CHEK1 primes it for subsequent phosphorylation at Ser-78, Ser-81 and Ser-87 by NEK11. Phosphorylation by NEK11 is required for BTRC-mediated polyubiquitination and degradation. Phosphorylation by PIM1 leads to an increase in phosphatase activity. Phosphorylated by PLK3 following DNA damage, leading to promote its ubiquitination and degradation. Ubiquitinated by the anaphase promoting complex/cyclosome (APC/C) ubiquitin ligase complex that contains FZR1/CDH1 during G1 phase leading to its degradation by the proteasome. Ubiquitinated by a SCF complex containing BTRC and FBXW11 during S phase leading to its degradation by the proteasome. Deubiquitination by USP17L2/DUB3 leads to its stabilization.

It carries out the reaction O-phospho-L-tyrosyl-[protein] + H2O = L-tyrosyl-[protein] + phosphate. Its activity is regulated as follows. Stimulated by B-type cyclins. Stimulated by PIM1-mediated phosphorylation. Tyrosine protein phosphatase which functions as a dosage-dependent inducer of mitotic progression. Directly dephosphorylates CDK1 and stimulates its kinase activity. Also dephosphorylates CDK2 in complex with cyclin-E, in vitro. The sequence is that of M-phase inducer phosphatase 1 (CDC25A) from Bos taurus (Bovine).